The chain runs to 1499 residues: DNA-directed RNA polymerase subunit beta' (1499 aa).

The Zn(2+) site is built by C67, C69, C82, and C85. Mg(2+) contacts are provided by D499, D501, and D503. Zn(2+)-binding residues include C867, C943, C950, and C953.

The protein belongs to the RNA polymerase beta' chain family. As to quaternary structure, the RNAP catalytic core consists of 2 alpha, 1 beta, 1 beta' and 1 omega subunit. When a sigma factor is associated with the core the holoenzyme is formed, which can initiate transcription. Requires Mg(2+) as cofactor. The cofactor is Zn(2+).

The catalysed reaction is RNA(n) + a ribonucleoside 5'-triphosphate = RNA(n+1) + diphosphate. In terms of biological role, DNA-dependent RNA polymerase catalyzes the transcription of DNA into RNA using the four ribonucleoside triphosphates as substrates. The protein is DNA-directed RNA polymerase subunit beta' of Prosthecochloris aestuarii (strain DSM 271 / SK 413).